A 321-amino-acid chain; its full sequence is Ribosomal large subunit pseudouridine synthase B (321 aa).

Residues 3–68 (EKLQKVLARA…KAQEEVICRV (66 aa)) enclose the S4 RNA-binding domain. The Nucleophile role is filled by Asp109. The segment at 254–321 (NMAPDAATRK…QQQSSRKPRG (68 aa)) is disordered. A compositionally biased stretch (basic residues) spans 263 to 277 (KRERTRSQKIRRAVR). Residues 302 to 321 (ESSTRNKVANQQQSSRKPRG) show a composition bias toward polar residues.

The protein belongs to the pseudouridine synthase RsuA family.

The enzyme catalyses uridine(2605) in 23S rRNA = pseudouridine(2605) in 23S rRNA. Its function is as follows. Responsible for synthesis of pseudouridine from uracil-2605 in 23S ribosomal RNA. The sequence is that of Ribosomal large subunit pseudouridine synthase B (rluB) from Vibrio cholerae serotype O1 (strain ATCC 39315 / El Tor Inaba N16961).